We begin with the raw amino-acid sequence, 397 residues long: Ribosomal RNA large subunit methyltransferase I (397 aa).

One can recognise a PUA domain in the interval 2–80 (SAAIYLVKGR…QDVNRAFFVK (79 aa)).

The protein belongs to the methyltransferase superfamily. RlmI family.

It is found in the cytoplasm. It carries out the reaction cytidine(1962) in 23S rRNA + S-adenosyl-L-methionine = 5-methylcytidine(1962) in 23S rRNA + S-adenosyl-L-homocysteine + H(+). Functionally, specifically methylates the cytosine at position 1962 (m5C1962) of 23S rRNA. This chain is Ribosomal RNA large subunit methyltransferase I, found in Vibrio vulnificus (strain YJ016).